The sequence spans 838 residues: AP-4 complex subunit beta (838 aa).

The hinge stretch occupies residues 582-673 (NSSKQTTSIN…NQNNNQNNNQ (92 aa)). The disordered stretch occupies residues 648 to 683 (ITDGNQNNNQNNNQNNNQNNNQNNNQNNQNNNNQNN). Low complexity predominate over residues 652–683 (NQNNNQNNNQNNNQNNNQNNNQNNQNNNNQNN). Residues 674–838 (NNQNNNNQNN…LSIPIPKIFN (165 aa)) form an ear region.

This sequence belongs to the adaptor complexes large subunit family. As to quaternary structure, may be part of the adaptor protein complex 4 (AP-4), a heterotetramer composed of two large adaptins (epsilon-type subunitand beta-type subunit), a medium adaptin (mu-type subunit) and a small adaptin (sigma-type).

Its subcellular location is the golgi apparatus. It is found in the trans-Golgi network membrane. Its function is as follows. Probable component of an adaptor protein complex. Adaptor protein complexes are vesicle coat components involved both in vesicle formation and cargo selection. They control the vesicular transport of proteins in different trafficking pathways. This chain is AP-4 complex subunit beta (ap4b1), found in Dictyostelium discoideum (Social amoeba).